The chain runs to 94 residues: MAGPKRFNKDKRPKRNTQSLLFKRKRFCRFTAAGVEEIDYKDIDTLRDFVAENGKIIPARLTGTRAIFQRQINTAVKRARFLAMLPYSDQHRSL.

The protein belongs to the bacterial ribosomal protein bS18 family. In terms of assembly, part of the 30S ribosomal subunit. Forms a tight heterodimer with protein bS6.

In terms of biological role, binds as a heterodimer with protein bS6 to the central domain of the 16S rRNA, where it helps stabilize the platform of the 30S subunit. In Polaromonas sp. (strain JS666 / ATCC BAA-500), this protein is Small ribosomal subunit protein bS18.